The following is a 180-amino-acid chain: Large ribosomal subunit protein uL5 (180 aa).

It belongs to the universal ribosomal protein uL5 family. As to quaternary structure, forms a bridge to the 30S subunit in the 70S ribosome. Part of the 50S ribosomal subunit; part of the 5S rRNA/L5/L18/L25 (CTC) subcomplex. Is known to contact the 5S rRNA, 23S rRNA and the P site tRNA.

Its function is as follows. This is one of the proteins that bind and probably mediate the attachment of the 5S RNA into the large ribosomal subunit, where it forms part of the central protuberance. In the 70S ribosome it contacts protein S13 of the 30S subunit (bridge B1b), connecting the 2 subunits; this bridge is implicated in subunit movement. Contacts the P site tRNA; the 5S rRNA and some of its associated proteins might help stabilize positioning of ribosome-bound tRNAs. The chain is Large ribosomal subunit protein uL5 (rplE) from Deinococcus radiodurans (strain ATCC 13939 / DSM 20539 / JCM 16871 / CCUG 27074 / LMG 4051 / NBRC 15346 / NCIMB 9279 / VKM B-1422 / R1).